The sequence spans 79 residues: D-alanyl carrier protein (79 aa).

The 77-residue stretch at 1–77 (MSIEETVIEL…KIVQGVEELQ (77 aa)) folds into the Carrier domain. At serine 35 the chain carries O-(pantetheine 4'-phosphoryl)serine.

It belongs to the DltC family. 4'-phosphopantetheine is transferred from CoA to a specific serine of apo-DCP.

Its subcellular location is the cytoplasm. It participates in cell wall biogenesis; lipoteichoic acid biosynthesis. Carrier protein involved in the D-alanylation of lipoteichoic acid (LTA). The loading of thioester-linked D-alanine onto DltC is catalyzed by D-alanine--D-alanyl carrier protein ligase DltA. The DltC-carried D-alanyl group is further transferred to cell membrane phosphatidylglycerol (PG) by forming an ester bond, probably catalyzed by DltD. D-alanylation of LTA plays an important role in modulating the properties of the cell wall in Gram-positive bacteria, influencing the net charge of the cell wall. In Streptococcus pyogenes serotype M1, this protein is D-alanyl carrier protein.